We begin with the raw amino-acid sequence, 287 residues long: Type 1 encapsulin shell protein EncA (287 aa).

It belongs to the encapsulin family. Family 1 subfamily. In terms of assembly, the 32 nm encapsulin nanocompartment is formed by 180 subunits; monomers form pentamers which assemble to form shells. There are 36 pores where the pentamers meet as well as 3-fold axis channels and dimer channels. The N-terminus of the protein is inside the shell.

The protein resides in the encapsulin nanocompartment. In terms of biological role, shell component of a type 1, iron-storage encapsulin nanocompartment. Encapsulin nanocompartments are 32 nm in diameter with an iron- and phosphorus-rich core (4Fe:1P) about 24 nm in diameter. Upon expression in E.coli most particles are 32 nm, 20% are 18 nm. The core is filled with an average of 14 dense granules, 5-6 nm in diameter that are not evenly distributed. Each nanocompartment is estimated to hold 30,000-35,000 Fe atoms. The minor proteins EncB, EncC and EncD probably lie against the interior face of the nanocompartment. The polypeptide is Type 1 encapsulin shell protein EncA (Myxococcus xanthus (strain DK1622)).